The sequence spans 72 residues: MEKKMAGFCIFFLVLFLAQEYGVEGKVCLNLSDKFKGPCLGTKNCDHHCRDIEHLLSGVCRDDFRCWCNRNC.

An N-terminal signal peptide occupies residues 1-25 (MEKKMAGFCIFFLVLFLAQEYGVEG). Intrachain disulfides connect C28–C72, C39–C60, and C45–C66.

This sequence belongs to the DEFL family. As to quaternary structure, may form dimers. Not glycosylated. Post-translationally, has 4 disulfide bonds.

Probably has antifungal activity. The polypeptide is Defensin 3 (Arachis hypogaea (Peanut)).